A 111-amino-acid chain; its full sequence is Ribosome-binding factor A (111 aa).

It belongs to the RbfA family. Monomer. Binds 30S ribosomal subunits, but not 50S ribosomal subunits or 70S ribosomes.

It is found in the cytoplasm. One of several proteins that assist in the late maturation steps of the functional core of the 30S ribosomal subunit. Associates with free 30S ribosomal subunits (but not with 30S subunits that are part of 70S ribosomes or polysomes). Required for efficient processing of 16S rRNA. May interact with the 5'-terminal helix region of 16S rRNA. This is Ribosome-binding factor A from Helicobacter pylori (strain G27).